Here is a 476-residue protein sequence, read N- to C-terminus: Amino acid permease 3 (476 aa).

Residues 1 to 33 (MVQNHQTVLAVDMPQTGGSKYLDDDGKNKRTGS) are Cytoplasmic-facing. A helical membrane pass occupies residues 34 to 54 (VWTASAHIITAVIGSGVLSLA). The Extracellular portion of the chain corresponds to 55–57 (WAT). A helical membrane pass occupies residues 58 to 78 (AQLGWLAGPVVMLLFSAVTYF). At 79 to 122 (TSSLLAACYRSGDPISGKRNYTYMDAVRSNLGGVKVTLCGIVQY) the chain is on the cytoplasmic side. Residues 123–143 (LNIFGVAIGYTIASAISMMAI) form a helical membrane-spanning segment. Over 144 to 166 (KRSNCFHKSGGKDPCHMNSNPYM) the chain is Extracellular. The next 2 membrane-spanning stretches (helical) occupy residues 167–187 (IAFGLVQILFSQIPDFDQLWW) and 188–208 (LSILAAVMSFTYSSAGLALGI). Residues 209-277 (AQVVVNGKVK…EEKTMKKATL (69 aa)) are Extracellular-facing. The chain crosses the membrane as a helical span at residues 278 to 298 (VSVSVTTMFYMLCGCMGYAAF). Residues 299-300 (GD) are Cytoplasmic-facing. Residues 301–321 (LSPGNLLTGFGFYNPYWLLDI) form a helical membrane-spanning segment. The Extracellular segment spans residues 322 to 324 (ANA). The chain crosses the membrane as a helical span at residues 325-345 (AIVIHLIGAYQVYCQPLFAFI). The Cytoplasmic portion of the chain corresponds to 346–384 (EKQASIQFPDSEFIAKDIKIPIPGFKPLRLNVFRLIWRT). 2 consecutive transmembrane segments (helical) span residues 385-405 (VFVIITTVISMLLPFFNDVVG) and 406-426 (LLGALGFWPLTVYFPVEMYIA). The Cytoplasmic segment spans residues 427-441 (QKKIPRWSTRWVCLQ). Residues 442–462 (VFSLGCLVVSIAAAAGSIAGV) traverse the membrane as a helical segment. Over 463–476 (LLDLKSYKPFRSEY) the chain is Extracellular.

This sequence belongs to the amino acid/polyamine transporter 2 family. Amino acid/auxin permease (AAAP) (TC 2.A.18.2) subfamily. In terms of tissue distribution, expressed in the root phloem. Detected in stamens, in cotyledons, and in major veins of mature leaves.

It is found in the cell membrane. The protein localises to the nucleus membrane. Its subcellular location is the endomembrane system. Its activity is regulated as follows. Inhibited by carbonylcyanide m-chlorophenylhydrazone and 2,4-dinitrophenol. Its function is as follows. Amino acid-proton symporter. Stereospecific transporter with a broad specificity for GABA, tryptophan and both neutral and basic amino acids. High affinity transport of cationic amino acids. This is Amino acid permease 3 (AAP3) from Arabidopsis thaliana (Mouse-ear cress).